The primary structure comprises 508 residues: Flavonoid 3',5'-hydroxylase 2 (508 aa).

Cys-443 contributes to the heme binding site.

The protein belongs to the cytochrome P450 family. The cofactor is heme. As to expression, flowers.

It is found in the microsome. The protein resides in the endoplasmic reticulum. The enzyme catalyses a 3',5'-unsubstituted flavanone + 2 reduced [NADPH--hemoprotein reductase] + 2 O2 = a 3',5'-dihydroxyflavanone + 2 oxidized [NADPH--hemoprotein reductase] + 2 H2O + 2 H(+). The protein operates within pigment biosynthesis; anthocyanin biosynthesis. Catalyzes the 3'5'-hydroxylation of naringenin and eriodictyol to form 5,7,3,'4',5'-pentahydroxyflavanone and 3',5'-hydroxylation of dihydrokaempferol and dihydroquercetin to form dihydromyricetin. The chain is Flavonoid 3',5'-hydroxylase 2 (CYP75A3) from Petunia hybrida (Petunia).